The primary structure comprises 120 residues: MFLLYKYDIFWAFLIISSVIPILAFLISAVLAPINKGPEKLSSYESGIEPMGDAWLQFRIRYYMFALVFVVFDVETVFLYPWAMSFDVLGVPVFIEAFIFMLILIVGLVYAWRKGALEWS.

3 consecutive transmembrane segments (helical) span residues 9 to 29, 64 to 84, and 88 to 108; these read IFWAFLIISSVIPILAFLISA, MFALVFVVFDVETVFLYPWAM, and VLGVPVFIEAFIFMLILIVGL.

It belongs to the complex I subunit 3 family. NDH is composed of at least 16 different subunits, 5 of which are encoded in the nucleus.

Its subcellular location is the plastid. It localises to the chloroplast thylakoid membrane. It carries out the reaction a plastoquinone + NADH + (n+1) H(+)(in) = a plastoquinol + NAD(+) + n H(+)(out). The enzyme catalyses a plastoquinone + NADPH + (n+1) H(+)(in) = a plastoquinol + NADP(+) + n H(+)(out). In terms of biological role, NDH shuttles electrons from NAD(P)H:plastoquinone, via FMN and iron-sulfur (Fe-S) centers, to quinones in the photosynthetic chain and possibly in a chloroplast respiratory chain. The immediate electron acceptor for the enzyme in this species is believed to be plastoquinone. Couples the redox reaction to proton translocation, and thus conserves the redox energy in a proton gradient. This is NAD(P)H-quinone oxidoreductase subunit 3, chloroplastic from Citrus sinensis (Sweet orange).